Here is a 703-residue protein sequence, read N- to C-terminus: Serotransferrin (703 aa).

Residues 1–19 (MDLSLHVALCLGMLALCLA) form the signal peptide. Transferrin-like domains lie at 27 to 341 (VRWC…ALKE) and 354 to 686 (VRWC…SLNK). 2 disulfides stabilise this stretch: cysteine 30–cysteine 65 and cysteine 40–cysteine 56. Residues aspartate 80 and tyrosine 112 each coordinate Fe(3+). Intrachain disulfides connect cysteine 135–cysteine 218, cysteine 180–cysteine 193, and cysteine 246–cysteine 260. Positions 137, 141, 143, and 144 each coordinate hydrogencarbonate. Fe(3+) is bound at residue tyrosine 212. Histidine 268 is a Fe(3+) binding site. The connecting region stretch occupies residues 341–350 (EGVKEDDLAA). Intrachain disulfides connect cysteine 357-cysteine 389 and cysteine 367-cysteine 380. Fe(3+) contacts are provided by aspartate 404 and tyrosine 443. 7 cysteine pairs are disulfide-bonded: cysteine 414-cysteine 698, cysteine 432-cysteine 659, cysteine 466-cysteine 545, cysteine 490-cysteine 687, cysteine 500-cysteine 514, cysteine 511-cysteine 528, and cysteine 585-cysteine 599. Residues threonine 468, arginine 472, alanine 474, and glycine 475 each coordinate hydrogencarbonate. Tyrosine 539 serves as a coordination point for Fe(3+). Fe(3+) is bound at residue histidine 607.

Belongs to the transferrin family. In terms of assembly, monomer. Plasma.

It localises to the secreted. Functionally, transferrins are iron binding transport proteins which can bind two Fe(3+) ions in association with the binding of an anion, usually bicarbonate. It is responsible for the transport of iron from sites of absorption and heme degradation to those of storage and utilization. Serum transferrin may also have a further role in stimulating cell proliferation. The sequence is that of Serotransferrin (tf) from Xenopus tropicalis (Western clawed frog).